We begin with the raw amino-acid sequence, 220 residues long: Elongation factor Ts, chloroplastic (220 aa).

This sequence belongs to the EF-Ts family.

It is found in the plastid. The protein localises to the chloroplast. Its function is as follows. Associates with the EF-Tu.GDP complex and induces the exchange of GDP to GTP. It remains bound to the aminoacyl-tRNA.EF-Tu.GTP complex up to the GTP hydrolysis stage on the ribosome. This chain is Elongation factor Ts, chloroplastic (tsf), found in Pyropia yezoensis (Susabi-nori).